Reading from the N-terminus, the 512-residue chain is Chlorogenic acid esterase (512 aa).

Positions 1–18 are cleaved as a signal peptide; it reads MLLRLCIIATLLVSHCVA. N-linked (GlcNAc...) asparagine glycosylation is found at asparagine 47, asparagine 80, and asparagine 98. A disulfide bridge connects residues cysteine 92 and cysteine 120. The active-site Acyl-ester intermediate is the serine 230. Asparagine 271 is a glycosylation site (N-linked (GlcNAc...) asparagine). An intrachain disulfide couples cysteine 281 to cysteine 292. Asparagine 295, asparagine 322, and asparagine 328 each carry an N-linked (GlcNAc...) asparagine glycan. Catalysis depends on glutamate 351, which acts as the Charge relay system. N-linked (GlcNAc...) asparagine glycans are attached at residues asparagine 391 and asparagine 402. The active-site Charge relay system is the histidine 416. An N-linked (GlcNAc...) asparagine glycan is attached at asparagine 474.

The protein belongs to the type-B carboxylesterase/lipase family.

Its subcellular location is the secreted. It carries out the reaction chlorogenate + H2O = L-quinate + (E)-caffeate + H(+). Extracellular chlorogenic acid esterase that releases caffeic acid from chlorogenic acid (CGA) contained in natural substrates such as apple marc and coffee pulp. Shows no activity towards 5-O-p-coumaroyl quinic acid, another quinic ester derivative, and rosmarinic acid, another caffeic ester derivative. This chain is Chlorogenic acid esterase, found in Aspergillus niger.